A 349-amino-acid polypeptide reads, in one-letter code: tRNA pseudouridine synthase D (349 aa).

Phe-27 is a binding site for substrate. Residue Asp-80 is the Nucleophile of the active site. Residue Asn-129 coordinates substrate. A TRUD domain is found at Gly-155 to Leu-303. Phe-329 contacts substrate.

It belongs to the pseudouridine synthase TruD family.

The enzyme catalyses uridine(13) in tRNA = pseudouridine(13) in tRNA. Functionally, responsible for synthesis of pseudouridine from uracil-13 in transfer RNAs. This is tRNA pseudouridine synthase D from Citrobacter koseri (strain ATCC BAA-895 / CDC 4225-83 / SGSC4696).